The chain runs to 800 residues: MKMKIIFLILILIFSINIIKCDKEFKMLTLLTAQVDDLGFNNMINQGRIEVAKGMNIEDSRLLVVEGFNETFKHLLPIVQNDDIDLVICSSSGHLQACRAIAEMYINSTTIKTQFLVRGSSSPTRNLIYISYNYASANYISGYFAALFSKTGKIGFVSPGQAANNNDSFVYAFWVGARQVNPDIKFYYYNIGNYLDVDKTVAATNDLLDMGCDVVGNTLDDFSTGDASIARGFPAIGTNGFPQRHVYGENVIYSYSYNWTKFFLPIAESVKSGNTNNSQWYADFDFDENKNFYHLDYGFEVNQSILDKMNTEIDYLKSTDRMSHPYYCNELIPQYAKENNLKLANVTGITLPIGCVTHQTFLSINKPFPGMTYLGNYKIKLVEVEFSQSLQYGFSITTGVLIAITIIMMLGIVRYKSTPSIRSASPIFLNFILAGGIIVYIGIIVWVGPANDHQCNARLWLVTLGFSTLIGSLVVKNFRIWLIFDNPELKSISITNYQLFPWVGACLVINIILMSILTSVGDLREIDAQGIDSLGKYEFMKVCKMNSSGASTLYTILAYFAALLLVGVFVSWKIRIVDIQEFNESKAIANTLYAISFCLFVIVPLMISPQDKQSETIVLCTAGLFITTAALLIIFTPKFWRVFTLGDGGTNDMFRKKQSNVATARAESSKSSSGPKLNRRGNLVSDDFTDTETSISEKKVNVVAGAVLAEFTDDTISEFDDNNIEQDNDNDNDNNNNNNNNNNNNNNNNNNNNNNNNNNNNNNNNNNNNNNNNNTNTSQPNDEKVEEKQQNDTEEEDKNQ.

The signal sequence occupies residues 1 to 21 (MKMKIIFLILILIFSINIIKC). At 22–392 (DKEFKMLTLL…EVEFSQSLQY (371 aa)) the chain is on the extracellular side. N-linked (GlcNAc...) asparagine glycans are attached at residues Asn69, Asn107, Asn166, Asn258, Asn276, Asn302, and Asn345. A helical transmembrane segment spans residues 393 to 413 (GFSITTGVLIAITIIMMLGIV). Over 414–426 (RYKSTPSIRSASP) the chain is Cytoplasmic. Residues 427–447 (IFLNFILAGGIIVYIGIIVWV) traverse the membrane as a helical segment. The Extracellular portion of the chain corresponds to 448–463 (GPANDHQCNARLWLVT). A helical transmembrane segment spans residues 464–484 (LGFSTLIGSLVVKNFRIWLIF). Residues 485–499 (DNPELKSISITNYQL) are Cytoplasmic-facing. A helical membrane pass occupies residues 500–520 (FPWVGACLVINIILMSILTSV). Over 521-551 (GDLREIDAQGIDSLGKYEFMKVCKMNSSGAS) the chain is Extracellular. N-linked (GlcNAc...) asparagine glycosylation is present at Asn546. A helical transmembrane segment spans residues 552 to 572 (TLYTILAYFAALLLVGVFVSW). Residues 573–586 (KIRIVDIQEFNESK) lie on the Cytoplasmic side of the membrane. The helical transmembrane segment at 587–607 (AIANTLYAISFCLFVIVPLMI) threads the bilayer. At 608 to 616 (SPQDKQSET) the chain is on the extracellular side. Residues 617–637 (IVLCTAGLFITTAALLIIFTP) traverse the membrane as a helical segment. The Cytoplasmic segment spans residues 638–800 (KFWRVFTLGD…NDTEEEDKNQ (163 aa)). Disordered stretches follow at residues 658–694 (QSNV…TETS) and 718–800 (EFDD…DKNQ). The span at 718-732 (EFDDNNIEQDNDNDN) shows a compositional bias: acidic residues. Positions 733–774 (DNNNNNNNNNNNNNNNNNNNNNNNNNNNNNNNNNNNNNNNNN) are enriched in low complexity. Positions 781 to 791 (NDEKVEEKQQN) are enriched in basic and acidic residues.

The protein in the N-terminal section; belongs to the BMP lipoprotein family. This sequence in the C-terminal section; belongs to the G-protein coupled receptor 3 family. GABA-B receptor subfamily.

The protein localises to the membrane. This is Metabotropic glutamate receptor-like protein C (grlC) from Dictyostelium discoideum (Social amoeba).